Reading from the N-terminus, the 325-residue chain is Tryptophan--tRNA ligase (325 aa).

ATP is bound by residues 9 to 11 (QPS) and 17 to 18 (GN). A 'HIGH' region motif is present at residues 10–18 (PSGILHIGN). Position 132 (Asp-132) interacts with L-tryptophan. Residues 144–146 (GKD), Val-184, and 191–195 (KMSKS) each bind ATP. The 'KMSKS' region signature appears at 191-195 (KMSKS).

It belongs to the class-I aminoacyl-tRNA synthetase family. In terms of assembly, homodimer.

It is found in the cytoplasm. The catalysed reaction is tRNA(Trp) + L-tryptophan + ATP = L-tryptophyl-tRNA(Trp) + AMP + diphosphate + H(+). In terms of biological role, catalyzes the attachment of tryptophan to tRNA(Trp). The sequence is that of Tryptophan--tRNA ligase from Fusobacterium nucleatum subsp. nucleatum (strain ATCC 25586 / DSM 15643 / BCRC 10681 / CIP 101130 / JCM 8532 / KCTC 2640 / LMG 13131 / VPI 4355).